The chain runs to 125 residues: MADLNKLAEDIVGLTLLEAQELKTILKDKYGIEPAAGGAVMMAGPAAGAAAPAEEEKTEFDVGLTDAGANKINVIKEVRAITGLGLKEAKDLVEAGGKVKEAVAKADAEAMKKKLEEAGAKVELK.

It belongs to the bacterial ribosomal protein bL12 family. In terms of assembly, homodimer. Part of the ribosomal stalk of the 50S ribosomal subunit. Forms a multimeric L10(L12)X complex, where L10 forms an elongated spine to which 2 to 4 L12 dimers bind in a sequential fashion. Binds GTP-bound translation factors.

In terms of biological role, forms part of the ribosomal stalk which helps the ribosome interact with GTP-bound translation factors. Is thus essential for accurate translation. This is Large ribosomal subunit protein bL12 from Cereibacter sphaeroides (Rhodobacter sphaeroides).